The sequence spans 546 residues: uncharacterized protein (546 aa).

In terms of domain architecture, SLH spans 52-123 (SVAELRDVQP…NTIEQLLQEN (72 aa)).

The protein belongs to the OprB family.

This is an uncharacterized protein from Synechocystis sp. (strain ATCC 27184 / PCC 6803 / Kazusa).